The sequence spans 292 residues: Mycothiol acetyltransferase (292 aa).

N-acetyltransferase domains are found at residues 2–138 (AEVV…PSAP) and 141–292 (VTVR…YAHS). Position 33 (E33) interacts with 1D-myo-inositol 2-(L-cysteinylamino)-2-deoxy-alpha-D-glucopyranoside. 68-70 (AVV) serves as a coordination point for acetyl-CoA. Residues E168, K215, and E225 each contribute to the 1D-myo-inositol 2-(L-cysteinylamino)-2-deoxy-alpha-D-glucopyranoside site. Residues 229–231 (VAV) and 236–242 (QGRGLGR) each bind acetyl-CoA. Residue Y263 coordinates 1D-myo-inositol 2-(L-cysteinylamino)-2-deoxy-alpha-D-glucopyranoside. 268-273 (NAAALH) serves as a coordination point for acetyl-CoA.

This sequence belongs to the acetyltransferase family. MshD subfamily. In terms of assembly, monomer.

The catalysed reaction is 1D-myo-inositol 2-(L-cysteinylamino)-2-deoxy-alpha-D-glucopyranoside + acetyl-CoA = mycothiol + CoA + H(+). Catalyzes the transfer of acetyl from acetyl-CoA to desacetylmycothiol (Cys-GlcN-Ins) to form mycothiol. This is Mycothiol acetyltransferase from Tsukamurella paurometabola (strain ATCC 8368 / DSM 20162 / CCUG 35730 / CIP 100753 / JCM 10117 / KCTC 9821 / NBRC 16120 / NCIMB 702349 / NCTC 13040) (Corynebacterium paurometabolum).